Consider the following 356-residue polypeptide: Cyclin-D4-1 (356 aa).

Belongs to the cyclin family. Cyclin D subfamily.

This Oryza sativa subsp. japonica (Rice) protein is Cyclin-D4-1 (CYCD4-1).